The primary structure comprises 428 residues: U2 small nuclear ribonucleoprotein auxiliary factor 35 kDa subunit-related protein 2-like (428 aa).

The segment at 1–51 (MASRQTAIPEKLSRKQYKAAMKKEKRKKRRQKMARLRALEAPPEEDDDVSA) is disordered. Basic residues predominate over residues 23–35 (KEKRKKRRQKMAR). Positions 42–51 (PPEEDDDVSA) are enriched in acidic residues. The residue at position 50 (S50) is a Phosphoserine. Residues 157–185 (EKYRPSCPFYNKTGACRFGNRCSRKHDFP) form a C3H1-type 1 zinc finger. Residues 189–295 (PTLLVKSMFT…RQLQCEFCPV (107 aa)) enclose the RRM domain. Residues 297-324 (RWKVAICGLFEMQKCPKGKHCNFLHVFR) form a C3H1-type 2 zinc finger. The tract at residues 339 to 428 (MSPPAWTGSS…PGPQSQSHRT (90 aa)) is disordered. The residue at position 340 (S340) is a Phosphoserine. Positions 351–366 (NSDRRERKDHHEEYYS) are enriched in basic and acidic residues. A compositionally biased stretch (low complexity) spans 367 to 377 (KSRSYHSGSYH). The residue at position 375 (S375) is a Phosphoserine. The segment covering 389-410 (SPHRWKKSHKQTTKSHERHSSR) has biased composition (basic residues). The span at 419–428 (PGPQSQSHRT) shows a compositional bias: polar residues.

As to quaternary structure, interacts with SF3B1. Interacts with ZCRB1. In terms of tissue distribution, highest expression levels are detected in the brain, and lower expression levels in other tissues like epididymis, testis, bone marrow or muscle. In testis, expressed in both Sertoli and spermatogenic cell.

The protein localises to the nucleus. Plays a role in splicing of the U12-type introns. Implicated also in removal of U2 introns positioned adjacent to a U12 intron. This Mus musculus (Mouse) protein is U2 small nuclear ribonucleoprotein auxiliary factor 35 kDa subunit-related protein 2-like.